We begin with the raw amino-acid sequence, 212 residues long: Sclerostin (212 aa).

A signal peptide spans 1–23 (MQLSLALCLVCLLVHAAFRVVEG). N-linked (GlcNAc...) asparagine glycosylation is present at Asn52. Cystine bridges form between Cys79–Cys133, Cys93–Cys147, Cys104–Cys164, and Cys108–Cys166. A CTCK domain is found at 81–171 (ELHFTRYVTD…ASCKCKRLTR (91 aa)). N-linked (GlcNAc...) asparagine glycosylation is present at Asn174. The disordered stretch occupies residues 179-212 (KDFGPEAARPQTGRKLRPRARGTKASRAELENAY). A compositionally biased stretch (basic residues) spans 190-202 (TGRKLRPRARGTK).

Belongs to the sclerostin family. As to quaternary structure, interacts with LRP4 (via the extracellular domain); the interaction facilitates the inhibition of Wnt signaling. Interacts with LRP5 (via the first two YWTD-EGF repeat domains); the interaction inhibits Wnt-mediated signaling. Interacts with LRP6.

Its subcellular location is the secreted. The protein localises to the extracellular space. The protein resides in the extracellular matrix. In terms of biological role, negative regulator of bone growth that acts through inhibition of Wnt signaling and bone formation. The sequence is that of Sclerostin from Bos taurus (Bovine).